The following is a 398-amino-acid chain: G2/mitotic-specific cyclin-B2 (398 aa).

T8 carries the post-translational modification Phosphothreonine. 3 positions are modified to phosphoserine: S11, S77, and S92. Phosphothreonine is present on T94. A phosphoserine mark is found at S99, S392, and S398.

It belongs to the cyclin family. Cyclin AB subfamily. In terms of assembly, interacts with the CDK1 protein kinase to form a serine/threonine kinase holoenzyme complex also known as maturation promoting factor (MPF). The cyclin subunit imparts substrate specificity to the complex.

In terms of biological role, essential for the control of the cell cycle at the G2/M (mitosis) transition. This is G2/mitotic-specific cyclin-B2 (CCNB2) from Homo sapiens (Human).